The sequence spans 175 residues: NADH-ubiquinone oxidoreductase chain 6 (175 aa).

6 helical membrane-spanning segments follow: residues 1 to 21 (MMAY…VGFS), 25 to 45 (SPIY…GIVM), 47 to 67 (FGGS…MLVV), 87 to 107 (AAVL…VLYV), 116 to 136 (VFNF…FGVF), and 149 to 169 (YGVW…LVIL).

This sequence belongs to the complex I subunit 6 family. In terms of assembly, core subunit of respiratory chain NADH dehydrogenase (Complex I) which is composed of 45 different subunits.

The protein resides in the mitochondrion inner membrane. The catalysed reaction is a ubiquinone + NADH + 5 H(+)(in) = a ubiquinol + NAD(+) + 4 H(+)(out). In terms of biological role, core subunit of the mitochondrial membrane respiratory chain NADH dehydrogenase (Complex I) which catalyzes electron transfer from NADH through the respiratory chain, using ubiquinone as an electron acceptor. Essential for the catalytic activity and assembly of complex I. The sequence is that of NADH-ubiquinone oxidoreductase chain 6 (MT-ND6) from Ceratotherium simum (White rhinoceros).